Consider the following 93-residue polypeptide: Small ribosomal subunit protein bS20 (93 aa).

The protein belongs to the bacterial ribosomal protein bS20 family.

Its function is as follows. Binds directly to 16S ribosomal RNA. This chain is Small ribosomal subunit protein bS20, found in Dictyoglomus thermophilum (strain ATCC 35947 / DSM 3960 / H-6-12).